We begin with the raw amino-acid sequence, 95 residues long: Small ribosomal subunit protein bS6 (95 aa).

It belongs to the bacterial ribosomal protein bS6 family.

Binds together with bS18 to 16S ribosomal RNA. The polypeptide is Small ribosomal subunit protein bS6 (Desulfitobacterium hafniense (strain DSM 10664 / DCB-2)).